A 711-amino-acid chain; its full sequence is Cyclomaltodextrin glucanotransferase (711 aa).

An N-terminal signal peptide occupies residues 1–31 (MRRWLSLVLSMSFVFSAIFIVSDTQKVTVEA). Residues 32–165 (AGNLNKVNFT…GIKVIIDFAP (134 aa)) are A1. 4 residues coordinate Ca(2+): D55, N57, N60, and N61. C71 and C78 are oxidised to a cystine. Ca(2+)-binding residues include G79 and D81. Substrate is bound at residue 127–128 (YW). N166 lines the Ca(2+) pocket. A b region spans residues 166–229 (NHTSPASETN…NLFDLADLNH (64 aa)). H167 lines the substrate pocket. A Ca(2+)-binding site is contributed by I217. Position 220 to 223 (220 to 223 (NLFD)) interacts with substrate. D226 is a binding site for Ca(2+). Positions 230–433 (QNPVIDRYLK…LRRNNPALAY (204 aa)) are A2. Residue R254 coordinates substrate. D256 (nucleophile) is an active-site residue. 259–260 (KH) provides a ligand contact to substrate. H260 contributes to the Ca(2+) binding site. E284 acts as the Proton donor in catalysis. Positions 354, 398, and 402 each coordinate substrate. The interval 434-522 (GDTEQRWING…EVGVWAYSAT (89 aa)) is c. A d region spans residues 523 to 606 (ESTPIIGHVG…SAAYDNFEVL (84 aa)). An IPT/TIG domain is found at 526–604 (PIIGHVGPMM…QTSAAYDNFE (79 aa)). A CBM20 domain is found at 605–711 (VLTNDQVSVR…TGKIIVDWQN (107 aa)). Positions 607–711 (TNDQVSVRFV…TGKIIVDWQN (105 aa)) are e.

It belongs to the glycosyl hydrolase 13 family. As to quaternary structure, monomer. Ca(2+) serves as cofactor.

Its subcellular location is the secreted. It carries out the reaction Cyclizes part of a (1-&gt;4)-alpha-D-glucan chain by formation of a (1-&gt;4)-alpha-D-glucosidic bond.. The chain is Cyclomaltodextrin glucanotransferase (cgt) from Geobacillus stearothermophilus (Bacillus stearothermophilus).